The following is an 854-amino-acid chain: V-type proton ATPase 116 kDa subunit a 2 (854 aa).

The Cytoplasmic portion of the chain corresponds to 1-393; that stretch reads MGSLFRSETM…DAYGVGSYQE (393 aa). Residues 394-412 form a helical membrane-spanning segment; that stretch reads VNPALFTIITFPFLFAVMF. Residues 413–414 are Vacuolar-facing; sequence GD. The chain crosses the membrane as a helical span at residues 415 to 431; that stretch reads FGHGFVMFLFALLLVLN. The Cytoplasmic segment spans residues 432–445; the sequence is ENHPRLNQSQEIMR. A helical membrane pass occupies residues 446–475; it reads MFFNGRYILLLMGLFSVYTGLIYNDCFSKS. At 476–549 the chain is on the vacuolar side; that stretch reads VNLFGSRWNV…ATNRLTFLNS (74 aa). A helical transmembrane segment spans residues 550-569; that stretch reads FKMKMSVILGITHMTFGVIL. The Cytoplasmic segment spans residues 570–587; sequence GIFNHLHFRKKFNICLVS. Residues 588–608 form a helical membrane-spanning segment; the sequence is IPELLFMLCIFGYLIFMIIYK. At 609 to 651 the chain is on the vacuolar side; sequence WLVYSAETSRTAPSILIEFISMFLFLASDTGGLYPGQEHVQRL. Residues 652-671 form a helical membrane-spanning segment; the sequence is LLLITVLSVPVLFLGKPLFL. At 672 to 739 the chain is on the cytoplasmic side; that stretch reads LWLHRGRSCF…EILMTQIIHS (68 aa). Phosphoserine is present on residues S695 and S700. Residues 740 to 764 form a helical membrane-spanning segment; that stretch reads IEYCLGCISNTASYLRLWALSLAHA. Residues 765–785 are Vacuolar-facing; sequence QLSEVLWAMLMHVGLRVDTAY. A helical transmembrane segment spans residues 786–824; that stretch reads GVLVLLPVIAFFAVLTIFILLIMEGLSAFLHAIRLHWVE. Topologically, residues 825 to 854 are cytoplasmic; the sequence is FQNKFYVGAGTKFVPFSFRLLSSKFSDDLA.

This sequence belongs to the V-ATPase 116 kDa subunit family. In terms of assembly, V-ATPase is a heteromultimeric enzyme made up of two complexes: the ATP-hydrolytic V1 complex and the proton translocation V0 complex. The V1 complex consists of three catalytic AB heterodimers that form a heterohexamer, three peripheral stalks each consisting of EG heterodimers, one central rotor including subunits D and F, and the regulatory subunits C and H. The proton translocation complex V0 consists of the proton transport subunit a, a ring of proteolipid subunits c9c'', rotary subunit d, subunits e and f, and the accessory subunits ATP6AP1/Ac45 and ATP6AP2/PRR. Directly interacts with PSCD2 through its N-terminal cytosolic tail in an intra-endosomal acidification-dependent manner. Disruption of this interaction results in the inhibition of endocytosis. Interacts with SPAAR. Highly expressed in lung, kidney and spleen.

Its subcellular location is the cell membrane. It is found in the endosome membrane. Subunit of the V0 complex of vacuolar(H+)-ATPase (V-ATPase), a multisubunit enzyme composed of a peripheral complex (V1) that hydrolyzes ATP and a membrane integral complex (V0) that translocates protons. V-ATPase is responsible for acidifying and maintaining the pH of intracellular compartments and in some cell types, is targeted to the plasma membrane, where it is responsible for acidifying the extracellular environment. Essential component of the endosomal pH-sensing machinery. May play a role in maintaining the Golgi functions, such as glycosylation maturation, by controlling the Golgi pH. In aerobic conditions, involved in intracellular iron homeostasis, thus triggering the activity of Fe(2+) prolyl hydroxylase (PHD) enzymes, and leading to HIF1A hydroxylation and subsequent proteasomal degradation. This Bos taurus (Bovine) protein is V-type proton ATPase 116 kDa subunit a 2 (ATP6V0A2).